A 157-amino-acid polypeptide reads, in one-letter code: uncharacterized protein (157 aa).

The disordered stretch occupies residues 1–157 (MNRGPPLRSR…SFSFLVPSNS (157 aa)). Positions 8–31 (RSRPPSSPPPASAFPGPSPFPSPS) are enriched in pro residues. Residues 62–71 (RTSHPPRCPH) show a composition bias toward basic residues. Residues 76-95 (PSAPSPPFTPPHPLPTPTPS) are compositionally biased toward pro residues. Low complexity-rich tracts occupy residues 96–117 (SSPR…SLAS) and 124–157 (SFSS…PSNS).

This is an uncharacterized protein from Vitis vinifera (Grape).